A 172-amino-acid polypeptide reads, in one-letter code: Small ribosomal subunit protein uS5 (172 aa).

The S5 DRBM domain maps to 17-80 (MREKMIAVNR…EECRRNLVKV (64 aa)).

Belongs to the universal ribosomal protein uS5 family. In terms of assembly, part of the 30S ribosomal subunit. Contacts proteins S4 and S8.

Its function is as follows. With S4 and S12 plays an important role in translational accuracy. Located at the back of the 30S subunit body where it stabilizes the conformation of the head with respect to the body. In Paracidovorax citrulli (strain AAC00-1) (Acidovorax citrulli), this protein is Small ribosomal subunit protein uS5.